The primary structure comprises 352 residues: Maleylacetate reductase (352 aa).

Belongs to the iron-containing alcohol dehydrogenase family.

It catalyses the reaction 3-oxoadipate + NAD(+) = maleylacetate + NADH + H(+). The enzyme catalyses 3-oxoadipate + NADP(+) = maleylacetate + NADPH + H(+). It functions in the pathway xenobiotic degradation; (2,4,5-trichlorophenoxy)acetate degradation. This Burkholderia cepacia (Pseudomonas cepacia) protein is Maleylacetate reductase (tftE).